A 215-amino-acid chain; its full sequence is Leucyl/phenylalanyl-tRNA--protein transferase (215 aa).

This sequence belongs to the L/F-transferase family.

Its subcellular location is the cytoplasm. It carries out the reaction N-terminal L-lysyl-[protein] + L-leucyl-tRNA(Leu) = N-terminal L-leucyl-L-lysyl-[protein] + tRNA(Leu) + H(+). The enzyme catalyses N-terminal L-arginyl-[protein] + L-leucyl-tRNA(Leu) = N-terminal L-leucyl-L-arginyl-[protein] + tRNA(Leu) + H(+). The catalysed reaction is L-phenylalanyl-tRNA(Phe) + an N-terminal L-alpha-aminoacyl-[protein] = an N-terminal L-phenylalanyl-L-alpha-aminoacyl-[protein] + tRNA(Phe). Functions in the N-end rule pathway of protein degradation where it conjugates Leu, Phe and, less efficiently, Met from aminoacyl-tRNAs to the N-termini of proteins containing an N-terminal arginine or lysine. This Campylobacter jejuni subsp. doylei (strain ATCC BAA-1458 / RM4099 / 269.97) protein is Leucyl/phenylalanyl-tRNA--protein transferase.